Consider the following 182-residue polypeptide: Adenine phosphoribosyltransferase (182 aa).

The protein belongs to the purine/pyrimidine phosphoribosyltransferase family. Homodimer.

The protein localises to the cytoplasm. The enzyme catalyses AMP + diphosphate = 5-phospho-alpha-D-ribose 1-diphosphate + adenine. It functions in the pathway purine metabolism; AMP biosynthesis via salvage pathway; AMP from adenine: step 1/1. Its function is as follows. Catalyzes a salvage reaction resulting in the formation of AMP, that is energically less costly than de novo synthesis. The chain is Adenine phosphoribosyltransferase from Campylobacter jejuni subsp. jejuni serotype O:2 (strain ATCC 700819 / NCTC 11168).